A 572-amino-acid polypeptide reads, in one-letter code: Phosphoenolpyruvate-protein phosphotransferase (572 aa).

His-191 (tele-phosphohistidine intermediate) is an active-site residue. Residues Arg-298 and Arg-334 each coordinate phosphoenolpyruvate. Mg(2+)-binding residues include Glu-433 and Asp-457. Phosphoenolpyruvate-binding positions include 456–457 (ND) and Arg-467. Residue Cys-504 is the Proton donor of the active site.

This sequence belongs to the PEP-utilizing enzyme family. As to quaternary structure, homodimer. Requires Mg(2+) as cofactor.

It is found in the cytoplasm. It catalyses the reaction L-histidyl-[protein] + phosphoenolpyruvate = N(pros)-phospho-L-histidyl-[protein] + pyruvate. In terms of biological role, general (non sugar-specific) component of the phosphoenolpyruvate-dependent sugar phosphotransferase system (sugar PTS). This major carbohydrate active-transport system catalyzes the phosphorylation of incoming sugar substrates concomitantly with their translocation across the cell membrane. Enzyme I transfers the phosphoryl group from phosphoenolpyruvate (PEP) to the phosphoryl carrier protein (HPr). In Staphylococcus aureus (strain MRSA252), this protein is Phosphoenolpyruvate-protein phosphotransferase (ptsI).